Reading from the N-terminus, the 118-residue chain is Melanoma antigen recognized by T-cells 1 (118 aa).

A helical membrane pass occupies residues 27-47 (AAGIGILTVILGVLLLIGCWY). Residues 48-118 (CRRRNGYRAL…AEQSPPPYSP (71 aa)) lie on the Cytoplasmic side of the membrane. Residues 78–118 (GFDHRDSKVSLQEKNCEPVVPNAPPAYEKLSAEQSPPPYSP) form a disordered region. Position 108 is a phosphoserine (Ser-108).

Interacts with PMEL. Interacts with GPR143. Post-translationally, acylated. In terms of tissue distribution, expression is restricted to melanoma and melanocyte cell lines and retina.

It is found in the endoplasmic reticulum membrane. The protein resides in the golgi apparatus. Its subcellular location is the trans-Golgi network membrane. The protein localises to the melanosome. Its function is as follows. Involved in melanosome biogenesis by ensuring the stability of GPR143. Plays a vital role in the expression, stability, trafficking, and processing of melanocyte protein PMEL, which is critical to the formation of stage II melanosomes. The chain is Melanoma antigen recognized by T-cells 1 (MLANA) from Homo sapiens (Human).